A 202-amino-acid chain; its full sequence is Imidazoleglycerol-phosphate dehydratase (202 aa).

It belongs to the imidazoleglycerol-phosphate dehydratase family.

It localises to the cytoplasm. It carries out the reaction D-erythro-1-(imidazol-4-yl)glycerol 3-phosphate = 3-(imidazol-4-yl)-2-oxopropyl phosphate + H2O. The protein operates within amino-acid biosynthesis; L-histidine biosynthesis; L-histidine from 5-phospho-alpha-D-ribose 1-diphosphate: step 6/9. In Parasynechococcus marenigrum (strain WH8102), this protein is Imidazoleglycerol-phosphate dehydratase.